The chain runs to 822 residues: Lysine-specific histone demethylase 2 (822 aa).

Residues 1–11 (MATPRGRTKKK) are compositionally biased toward basic residues. Residues 1 to 47 (MATPRGRTKKKASFDHSPDSLPLRSSGRQAKKKATETTDEDEDGGSE) are disordered. Residues Ser13, Ser17, and Ser26 each carry the phosphoserine modification. Positions 53, 58, 65, 73, 84, 90, 92, 95, 142, 147, 169, and 185 each coordinate Zn(2+). A CW-type zinc finger spans residues 133-193 (DQQLPYWVQC…HCSLPEDLRV (61 aa)). Ser247 carries the phosphoserine modification. A GLYR1-binding region spans residues 273 to 292 (YQPNECGKALCVRPDVMELD). The SWIRM domain occupies 275–373 (PNECGKALCV…TGVLSVGADQ (99 aa)). 383–439 (KSVIIIGAGPAGLAAARQLHNFGIKVTVLEAKDRIGGRVWDDKSFKGVTVGRGAQIV) contacts FAD. Histone H3-binding stretches follow at residues 438 to 467 (IVNGCINNPVALMCEQLGISMHKFGERCDL), 487 to 498 (FNALLDVVSEWR), and 538 to 572 (FHLSNLEYACGSNLHQVSARSWDHNEFFAQFAGDH). Residues 564-566 (FFA) are GLYR1-binding. FAD contacts are provided by residues Val598, Glu795, and 803–805 (QTV). Residues 798 to 814 (NRHFPQTVTGAYLSGVR) are GLYR1-binding.

This sequence belongs to the flavin monoamine oxidase family. Interacts with its cofactor GLYR1 at nucleosomes; this interaction stimulates H3K4me1 and H3K4me2 demethylation. In contrast to KDM1A, does not form a complex with RCOR1/CoREST. Possible accessory component of the polycomb repressive deubiquitinase (PR-DUB) complex, at least composed of BAP1, one of ASXL1, ASXL2 or (probably) ASXL3 and one of MBD5 or MBD6. The PR-DUB core associates with a number of accessory proteins, including FOXK1, FOXK2, KDM1B, HCFC1 and OGT; KDM1B specifically associates with ASXL2 PR-DUB complexes. FAD serves as cofactor. It depends on Zn(2+) as a cofactor.

The protein localises to the nucleus. It is found in the chromosome. It catalyses the reaction N(6),N(6)-dimethyl-L-lysyl(4)-[histone H3] + 2 A + 2 H2O = L-lysyl(4)-[histone H3] + 2 formaldehyde + 2 AH2. The catalysed reaction is N(6)-methyl-L-lysyl(4)-[histone H3] + A + H2O = L-lysyl(4)-[histone H3] + formaldehyde + AH2. With respect to regulation, histone H3K4me1 and H3K4me2 demethylase activity is inhibited by DNA, this inhibition is released in complex with GLYR1. Functionally, histone demethylase that demethylates 'Lys-4' of histone H3, a specific tag for epigenetic transcriptional activation, thereby acting as a corepressor. Required for de novo DNA methylation of a subset of imprinted genes during oogenesis. Acts by oxidizing the substrate by FAD to generate the corresponding imine that is subsequently hydrolyzed. Demethylates both mono- and di-methylated 'Lys-4' of histone H3. Has no effect on tri-methylated 'Lys-4', mono-, di- or tri-methylated 'Lys-9', mono-, di- or tri-methylated 'Lys-27', mono-, di- or tri-methylated 'Lys-36' of histone H3, or on mono-, di- or tri-methylated 'Lys-20' of histone H4. Alone, it is unable to demethylate H3K4me on nucleosomes and requires the presence of GLYR1 to achieve such activity, they form a multifunctional enzyme complex that modifies transcribed chromatin and facilitates Pol II transcription through nucleosomes. This is Lysine-specific histone demethylase 2 from Homo sapiens (Human).